The primary structure comprises 237 residues: Uridylate kinase (237 aa).

9 to 12 contacts ATP; it reads KLSG. Positions 17–22 are involved in allosteric activation by GTP; that stretch reads GSQGYG. A UMP-binding site is contributed by glycine 51. Residues glycine 52 and arginine 56 each contribute to the ATP site. Residues aspartate 71 and 132–139 contribute to the UMP site; that span reads CGNPFFTT. ATP-binding residues include threonine 159, tyrosine 165, and aspartate 168.

It belongs to the UMP kinase family. As to quaternary structure, homohexamer.

The protein localises to the cytoplasm. It carries out the reaction UMP + ATP = UDP + ADP. The protein operates within pyrimidine metabolism; CTP biosynthesis via de novo pathway; UDP from UMP (UMPK route): step 1/1. Allosterically activated by GTP. Inhibited by UTP. Its function is as follows. Catalyzes the reversible phosphorylation of UMP to UDP. The protein is Uridylate kinase of Synechococcus sp. (strain CC9902).